We begin with the raw amino-acid sequence, 77 residues long: Acyl carrier protein (77 aa).

Residues 1-76 (MATFDDVKAV…DVVNYIDNLK (76 aa)) enclose the Carrier domain. Residue S36 is modified to O-(pantetheine 4'-phosphoryl)serine.

The protein belongs to the acyl carrier protein (ACP) family. Post-translationally, 4'-phosphopantetheine is transferred from CoA to a specific serine of apo-ACP by AcpS. This modification is essential for activity because fatty acids are bound in thioester linkage to the sulfhydryl of the prosthetic group.

The protein resides in the cytoplasm. The protein operates within lipid metabolism; fatty acid biosynthesis. Carrier of the growing fatty acid chain in fatty acid biosynthesis. The polypeptide is Acyl carrier protein (Campylobacter jejuni subsp. jejuni serotype O:6 (strain 81116 / NCTC 11828)).